The sequence spans 129 residues: Cytochrome b5 (129 aa).

One can recognise a Cytochrome b5 heme-binding domain in the interval 8–84 (TTIYTHEEVA…LEKLYIGNLK (77 aa)). Positions 43 and 67 each coordinate heme. Residues 104–124 (GINFPLIAVGVFLAAFGVYYY) form a helical membrane-spanning segment.

This sequence belongs to the cytochrome b5 family.

The protein localises to the endoplasmic reticulum membrane. It is found in the microsome membrane. Functionally, membrane bound hemoprotein which function as an electron carrier for several membrane bound oxygenases. In Candida tropicalis (Yeast), this protein is Cytochrome b5 (Cytb5).